The following is a 276-amino-acid chain: Putative translation initiation factor eIF-2B subunit 2-like (276 aa).

The protein belongs to the eIF-2B alpha/beta/delta subunits family. Complex of two different subunits.

Functionally, catalyzes the exchange of initiation factor 2-bound GDP for GTP. The polypeptide is Putative translation initiation factor eIF-2B subunit 2-like (Pyrococcus furiosus (strain ATCC 43587 / DSM 3638 / JCM 8422 / Vc1)).